Here is a 316-residue protein sequence, read N- to C-terminus: Dof zinc finger protein DOF5.7 (316 aa).

The tract at residues 1–42 (MSSHTNLPSPKPVPKPDHRISGTSQTKKPPSSSVAQDQQNLK) is disordered. Polar residues predominate over residues 21-42 (SGTSQTKKPPSSSVAQDQQNLK). The Dof-type zinc finger occupies 41-95 (LKCPRCNSPNTKFCYYNNYSLSQPRHFCKSCRRYWTRGGALRNVPIGGGCRKTKK). Zn(2+)-binding residues include C43, C46, C68, and C71. Disordered regions lie at residues 92 to 111 (KTKK…SSSS) and 257 to 294 (NSSS…NTGG). Over residues 101-111 (SSMNTLPSSSS) the composition is skewed to low complexity. Residues 257 to 291 (NSSSPSSPTKKGDNQTEWYFGNNSDNEGVISNNAN) are compositionally biased toward polar residues.

The protein localises to the nucleus. Functionally, transcription factor that binds specifically to a 5'-AA[AG]G-3' consensus core sequence. This chain is Dof zinc finger protein DOF5.7 (DOF5.7), found in Arabidopsis thaliana (Mouse-ear cress).